The sequence spans 1029 residues: Sodium/potassium-transporting ATPase subunit alpha-4 (1029 aa).

A disordered region spans residues 1 to 37 (MGLWGKKGTVAPHDQSPRRRPKKGLIKKKMVKREKQK). Residues 1–95 (MGLWGKKGTV…NTVTPPPTTP (95 aa)) lie on the Cytoplasmic side of the membrane. Basic residues predominate over residues 18-36 (RRRPKKGLIKKKMVKREKQ). The segment at 90–92 (PPP) is interaction with phosphoinositide-3 kinase. The chain crosses the membrane as a helical span at residues 96–116 (EWVKFCKQLFGGFSLLLWTGA). Residues 117-139 (ILCFVAYSIQIYFNEEPTKDNLY) are Extracellular-facing. Residues 140–160 (LSIVLSVVVIVTGCFSYYQEA) form a helical membrane-spanning segment. At 161 to 296 (KSSKIMESFK…VGQTPIAAEI (136 aa)) the chain is on the cytoplasmic side. Over residues 223–237 (NSSLTGESEPQSRSP) the composition is skewed to polar residues. The disordered stretch occupies residues 223 to 242 (NSSLTGESEPQSRSPDFTHE). A helical membrane pass occupies residues 297 to 316 (EHFIHLITVVAVFLGVTFFA). Topologically, residues 317-328 (LSLLLGYGWLEA) are extracellular. A helical transmembrane segment spans residues 329-346 (IIFLIGIIVANVPEGLLA). Topologically, residues 347-778 (TVTVCLTLTA…EEGRLIFDNL (432 aa)) are cytoplasmic. Asp-384 acts as the 4-aspartylphosphate intermediate in catalysis. Residues Asp-723 and Asp-727 each contribute to the Mg(2+) site. The chain crosses the membrane as a helical span at residues 779 to 798 (KKSIMYTLTSNIPEITPFLM). The Extracellular portion of the chain corresponds to 799 to 808 (FIILGIPLPL). A helical transmembrane segment spans residues 809-829 (GTITILCIDLGTDMVPAISLA). Residues 830-849 (YESAESDIMKRLPRNPKTDN) are Cytoplasmic-facing. A helical transmembrane segment spans residues 850–872 (LVNHRLIGMAYGQIGMIQALAGF). The Extracellular portion of the chain corresponds to 873 to 924 (FTYFVILAENGFRPVDLLGIRLHWEDKYLNDLEDSYGQQWTYEQRKVVEFTC). A helical membrane pass occupies residues 925 to 944 (QTAFFVTIVVVQWADLIISK). The Cytoplasmic portion of the chain corresponds to 945-957 (TRRNSLFQQGMRN). The residue at position 949 (Ser-949) is a Phosphoserine; by PKA. Residues 958 to 976 (KVLIFGILEETLLAAFLSY) form a helical membrane-spanning segment. The Extracellular segment spans residues 977–991 (TPGMDVALRMYPLKI). A helical transmembrane segment spans residues 992–1012 (TWWLCAIPYSILIFVYDEIRK). At 1013 to 1029 (LLIRQHPDGWVERETYY) the chain is on the cytoplasmic side.

This sequence belongs to the cation transport ATPase (P-type) (TC 3.A.3) family. Type IIC subfamily. As to quaternary structure, the sodium/potassium-transporting ATPase is composed of a catalytic alpha subunit, an auxiliary non-catalytic beta subunit and an additional regulatory subunit. Specifically expressed in testis. Found in very low levels in skeletal muscle. Expressed in mature sperm (at protein level).

It is found in the cell membrane. It carries out the reaction K(+)(out) + Na(+)(in) + ATP + H2O = K(+)(in) + Na(+)(out) + ADP + phosphate + H(+). With respect to regulation, specifically inhibited by an endogenous cardiac glycoside, ouabain. In terms of biological role, this is the catalytic component of the active enzyme, which catalyzes the hydrolysis of ATP coupled with the exchange of sodium and potassium ions across the plasma membrane. This action creates the electrochemical gradient of sodium and potassium ions, providing the energy for active transport of various nutrients. Plays a role in sperm motility. The polypeptide is Sodium/potassium-transporting ATPase subunit alpha-4 (Homo sapiens (Human)).